Here is a 378-residue protein sequence, read N- to C-terminus: Heme chaperone HemW (378 aa).

The 237-residue stretch at 1 to 237 (MVKLPPLSLY…LTAAGYQQYE (237 aa)) folds into the Radical SAM core domain. Tyr-10 is an S-adenosyl-L-methionine binding site. Residues Cys-16, Cys-20, and Cys-23 each coordinate [4Fe-4S] cluster. Residues Gly-66, 67–68 (GT), Glu-99, Gln-126, Arg-138, and Asp-163 each bind S-adenosyl-L-methionine.

The protein belongs to the anaerobic coproporphyrinogen-III oxidase family. HemW subfamily. Binding of the [4Fe-4S] cofactor promotes dimerization. The cofactor is [4Fe-4S] cluster.

It is found in the cytoplasm. Its function is as follows. Probably acts as a heme chaperone, transferring heme to the NarI subunit of the respiratory enzyme nitrate reductase; transfer may be stimulated by NADH. Binds one molecule of heme per monomer, possibly covalently. Heme binding is not affected by either [4Fe-4S] or S-adenosyl-L-methionine (SAM)-binding. Does not have coproporphyrinogen III dehydrogenase activity in vitro. Binds 1 [4Fe-4S] cluster. The cluster is coordinated with 3 cysteines and an exchangeable S-adenosyl-L-methionine. The sequence is that of Heme chaperone HemW from Escherichia coli (strain K12).